A 98-amino-acid polypeptide reads, in one-letter code: Co-chaperonin GroES (98 aa).

Residues 32 to 56 (NAKEKPQQGEVLAVGPGRRDDEGKR) are disordered.

Belongs to the GroES chaperonin family. As to quaternary structure, heptamer of 7 subunits arranged in a ring. Interacts with the chaperonin GroEL.

The protein localises to the cytoplasm. In terms of biological role, together with the chaperonin GroEL, plays an essential role in assisting protein folding. The GroEL-GroES system forms a nano-cage that allows encapsulation of the non-native substrate proteins and provides a physical environment optimized to promote and accelerate protein folding. GroES binds to the apical surface of the GroEL ring, thereby capping the opening of the GroEL channel. The sequence is that of Co-chaperonin GroES from Bifidobacterium animalis subsp. lactis (strain AD011).